The following is a 282-amino-acid chain: Bis(5'-nucleosyl)-tetraphosphatase, symmetrical (282 aa).

Belongs to the Ap4A hydrolase family.

It catalyses the reaction P(1),P(4)-bis(5'-adenosyl) tetraphosphate + H2O = 2 ADP + 2 H(+). Hydrolyzes diadenosine 5',5'''-P1,P4-tetraphosphate to yield ADP. The polypeptide is Bis(5'-nucleosyl)-tetraphosphatase, symmetrical (Escherichia coli O127:H6 (strain E2348/69 / EPEC)).